The sequence spans 93 residues: Regulatory protein RepI (93 aa).

Functionally, this protein is involved in regulating the plasmid copy-number. Increasing the level of this protein results in a higher plasmid copy-number. The sequence is that of Regulatory protein RepI (repI) from Escherichia coli.